We begin with the raw amino-acid sequence, 190 residues long: Guanylate kinase (190 aa).

A Guanylate kinase-like domain is found at 8–188; the sequence is GRLVILAGPS…AVSAIKAVLL (181 aa). Position 15–22 (15–22) interacts with ATP; the sequence is GPSAVGKS.

The protein belongs to the guanylate kinase family.

The protein resides in the cytoplasm. The enzyme catalyses GMP + ATP = GDP + ADP. In terms of biological role, essential for recycling GMP and indirectly, cGMP. The chain is Guanylate kinase from Corynebacterium efficiens (strain DSM 44549 / YS-314 / AJ 12310 / JCM 11189 / NBRC 100395).